We begin with the raw amino-acid sequence, 141 residues long: MAVQRTFSIIKPDAVAKNVIGKITTRFEEAGLKIVASKMKQLSKAEAEGFYAEHSERGFFGDLVAFMTSGPVVVQVLEGENAIAKNRELMGATNPKEAAAGTIRADFAESIDANAVHGSDSEAAAAREIAYFFAATEVTTR.

Residues Lys11, Phe59, Arg87, Thr93, Arg104, and Asn114 each contribute to the ATP site. The active-site Pros-phosphohistidine intermediate is the His117.

It belongs to the NDK family. As to quaternary structure, homotetramer. The cofactor is Mg(2+).

The protein resides in the cytoplasm. The catalysed reaction is a 2'-deoxyribonucleoside 5'-diphosphate + ATP = a 2'-deoxyribonucleoside 5'-triphosphate + ADP. The enzyme catalyses a ribonucleoside 5'-diphosphate + ATP = a ribonucleoside 5'-triphosphate + ADP. Its function is as follows. Major role in the synthesis of nucleoside triphosphates other than ATP. The ATP gamma phosphate is transferred to the NDP beta phosphate via a ping-pong mechanism, using a phosphorylated active-site intermediate. The polypeptide is Nucleoside diphosphate kinase (Pseudomonas putida (strain ATCC 47054 / DSM 6125 / CFBP 8728 / NCIMB 11950 / KT2440)).